A 54-amino-acid polypeptide reads, in one-letter code: Large ribosomal subunit protein bL33 (54 aa).

It belongs to the bacterial ribosomal protein bL33 family.

This is Large ribosomal subunit protein bL33 from Corynebacterium diphtheriae (strain ATCC 700971 / NCTC 13129 / Biotype gravis).